Consider the following 474-residue polypeptide: HTH-type transcriptional regulator RamB (474 aa).

Residues 10–64 (VRQLRNERGFSQAALAQMLEISPSYLNQIEHDVRPLTVAVLLRITEVFGVDATFF) form the HTH cro/C1-type domain. The H-T-H motif DNA-binding region spans 21-40 (QAALAQMLEISPSYLNQIEH).

This sequence belongs to the short-chain fatty acyl-CoA assimilation regulator (ScfR) family.

Its function is as follows. Involved in the control of the glyoxylate cycle. RamB negatively controls the expression of icl expression during growth on acetate as the sole carbon source. The sequence is that of HTH-type transcriptional regulator RamB from Mycobacterium tuberculosis (strain CDC 1551 / Oshkosh).